Reading from the N-terminus, the 715-residue chain is MIYQGKAITVKALESGIVELKFDLKGESVNKFNRLTLNELRQAVDAIQADASVKGVIVSSGKDVFIVGADITEFVDNFKLPEAELVAGNLEANRIFNAFEDLEVPTVAAISGIALGGGLEMCLAADYRVMSTSAKIGLPEVKLGIYPGFGGTVRLPRLIGSDNAIEWIAAGKENRAEDALKVGAVDAVVAPELLMAGALDLVKRAISGELDYKAKRQPKLEKLKLNAIEQMMAFETAKGFVAGQAGPNYPAPVEAIKTIQKAANFGRDKALEVEAAGFAKLAKTSVAESLIGLFLNDQELKRKAKAHDEIAHDAKQAAVLGAGIMGGGIAYQSAVKGTPILMKDIREEAIQLGLNEASKLLGNRVEKGRLTPAKMAEALNAIRPTLSYGDFANVDIVVEAVVENPKVKQAVLAEVETQVKDDAILASNTSTISINLLAKALKRPENFVGMHFFNPVHMMPLVEVIRGEKSSEVAVATTVAYAKKMGKNPIVVNDCPGFLVNRVLFPYFGGFAKLVSAGVDFVRIDKVMEKFGWPMGPAYLMDVVGIDTGHHGRDVMAEGFPDRMKDERRSAVDALYEANRLGQKNGKGFYAYETDKRGKPKKVADASVLDVLKPIVFEQREVTDEDIINWMMIPLCLETVRCLEDGIVETAAEADMGLVYGIGFPPFRGGALRYIDSIGVAEFVALADQYADLGPLYHPTAKLREMAKNGQRFFN.

Positions 1 to 190 (MIYQGKAITV…KVGAVDAVVA (190 aa)) are enoyl-CoA hydratase/isomerase. Aspartate 297 serves as a coordination point for substrate. A 3-hydroxyacyl-CoA dehydrogenase region spans residues 312 to 715 (HDAKQAAVLG…MAKNGQRFFN (404 aa)). Residues methionine 325, aspartate 344, 401 to 403 (VVE), lysine 408, and serine 430 contribute to the NAD(+) site. Histidine 451 (for 3-hydroxyacyl-CoA dehydrogenase activity) is an active-site residue. Position 454 (asparagine 454) interacts with NAD(+). Residues asparagine 501 and tyrosine 660 each coordinate substrate.

It in the N-terminal section; belongs to the enoyl-CoA hydratase/isomerase family. The protein in the C-terminal section; belongs to the 3-hydroxyacyl-CoA dehydrogenase family. As to quaternary structure, heterotetramer of two alpha chains (FadB) and two beta chains (FadA).

The enzyme catalyses a (3S)-3-hydroxyacyl-CoA + NAD(+) = a 3-oxoacyl-CoA + NADH + H(+). It carries out the reaction a (3S)-3-hydroxyacyl-CoA = a (2E)-enoyl-CoA + H2O. It catalyses the reaction a 4-saturated-(3S)-3-hydroxyacyl-CoA = a (3E)-enoyl-CoA + H2O. The catalysed reaction is (3S)-3-hydroxybutanoyl-CoA = (3R)-3-hydroxybutanoyl-CoA. The enzyme catalyses a (3Z)-enoyl-CoA = a 4-saturated (2E)-enoyl-CoA. It carries out the reaction a (3E)-enoyl-CoA = a 4-saturated (2E)-enoyl-CoA. It participates in lipid metabolism; fatty acid beta-oxidation. Its function is as follows. Involved in the aerobic and anaerobic degradation of long-chain fatty acids via beta-oxidation cycle. Catalyzes the formation of 3-oxoacyl-CoA from enoyl-CoA via L-3-hydroxyacyl-CoA. It can also use D-3-hydroxyacyl-CoA and cis-3-enoyl-CoA as substrate. This chain is Fatty acid oxidation complex subunit alpha, found in Ectopseudomonas oleovorans (Pseudomonas oleovorans).